The following is a 143-amino-acid chain: Large-conductance mechanosensitive channel (143 aa).

Transmembrane regions (helical) follow at residues 10-30 (FAVKGNVMDLAVGVIIGGAFS) and 89-109 (GSFITVAINFVILAFIIFLMV).

It belongs to the MscL family. As to quaternary structure, homopentamer.

The protein localises to the cell inner membrane. Its function is as follows. Channel that opens in response to stretch forces in the membrane lipid bilayer. May participate in the regulation of osmotic pressure changes within the cell. The protein is Large-conductance mechanosensitive channel of Burkholderia cenocepacia (strain ATCC BAA-245 / DSM 16553 / LMG 16656 / NCTC 13227 / J2315 / CF5610) (Burkholderia cepacia (strain J2315)).